We begin with the raw amino-acid sequence, 155 residues long: 17.6 kDa class II heat shock protein (155 aa).

In terms of domain architecture, sHSP spans 38 to 155 (DAKAMAATPA…KPKTIQVQVA (118 aa)).

This sequence belongs to the small heat shock protein (HSP20) family. As to quaternary structure, may form oligomeric structures.

The protein resides in the cytoplasm. The chain is 17.6 kDa class II heat shock protein (HSP17.6) from Arabidopsis thaliana (Mouse-ear cress).